The chain runs to 382 residues: Saccharopine dehydrogenase [NAD(+), L-lysine-forming] (382 aa).

Residues R20 and K79 each coordinate L-saccharopine. K79 (proton acceptor) is an active-site residue. Catalysis depends on H98, which acts as the Proton donor. Q103 contributes to the L-saccharopine binding site. R132 provides a ligand contact to NAD(+). Positions 133 and 137 each coordinate L-saccharopine. NAD(+) contacts are provided by residues 215-216 (GR), D239, T243, Y263, and V290. A disulfide bridge links C217 with C261. 291–293 (SAD) provides a ligand contact to L-saccharopine. 330-333 (IDHL) provides a ligand contact to NAD(+).

Belongs to the AlaDH/PNT family. Monomer.

The catalysed reaction is L-saccharopine + NAD(+) + H2O = L-lysine + 2-oxoglutarate + NADH + H(+). Its pathway is amino-acid biosynthesis; L-lysine biosynthesis via AAA pathway; L-lysine from L-alpha-aminoadipate (fungal route): step 3/3. Its function is as follows. Catalyzes the NAD(+)-dependent cleavage of saccharopine to L-lysine and 2-oxoglutarate, the final step in the alpha-aminoadipate (AAA) pathway for lysin biosynthesis. This is Saccharopine dehydrogenase [NAD(+), L-lysine-forming] from Candida albicans (strain SC5314 / ATCC MYA-2876) (Yeast).